The following is a 100-amino-acid chain: Urease subunit gamma (100 aa).

This sequence belongs to the urease gamma subunit family. In terms of assembly, heterotrimer of UreA (gamma), UreB (beta) and UreC (alpha) subunits. Three heterotrimers associate to form the active enzyme.

It localises to the cytoplasm. The enzyme catalyses urea + 2 H2O + H(+) = hydrogencarbonate + 2 NH4(+). Its pathway is nitrogen metabolism; urea degradation; CO(2) and NH(3) from urea (urease route): step 1/1. This is Urease subunit gamma from Methylibium petroleiphilum (strain ATCC BAA-1232 / LMG 22953 / PM1).